An 80-amino-acid chain; its full sequence is Raniseptin-1 (80 aa).

The N-terminal stretch at 1 to 22 (MAFLKKSLFLVLFLGIVSLSIC) is a signal peptide. Residues 23-49 (EEEKREGEEEEKQEEENEELSEEELRE) constitute a propeptide that is removed on maturation.

This sequence belongs to the frog skin active peptide (FSAP) family. Dermaseptin subfamily. In terms of tissue distribution, expressed by the skin glands.

It is found in the secreted. In terms of biological role, has antibacterial activity against the Gram-negative bacteria E.coli ATCC 25922 (MIC=5 uM), P.aeruginosa ATCC 27853 (MIC=10 uM) and X.citri (MIC&lt; 2 uM), and the Gram-positive bacterium S.aureus ATCC 29313 (MIC=20 uM). Does not have hemolytic activity against human erythrocytes. This Boana raniceps (Chaco tree frog) protein is Raniseptin-1.